Reading from the N-terminus, the 253-residue chain is POU Class 2 homeobox-associating factor 3 (253 aa).

Residues 5-27 enclose the OCA domain; sequence PKVYQGVRVKMTVKELLQQRRAH.

Belongs to the POU2AF family. As to quaternary structure, interacts with POU2F3 in a DNA-dependent manner; this interaction increases POU2F3 transactivation activity. As to expression, expressed in tuft cells.

The protein resides in the cytoplasm. It is found in the nucleus. In terms of biological role, transcriptional coactivator that specifically associates with POU2F3. This complex drives the development of tuft cells, a rare a rare chemosensory cells that coordinate immune and neural functions within mucosal epithelial tissues. The polypeptide is POU Class 2 homeobox-associating factor 3 (Mus musculus (Mouse)).